Consider the following 20-residue polypeptide: Dentinal fluid transport-stimulating peptide (20 aa).

Residues glycine 1 to glycine 20 are disordered. Basic and acidic residues predominate over residues glutamine 8–glycine 20.

This peptide stimulates the transport of dentinal fluid, which is important for the prevention of dental caries. The sequence is that of Dentinal fluid transport-stimulating peptide from Rattus norvegicus (Rat).